The sequence spans 190 residues: UPF0398 protein LAR_0869 (190 aa).

This sequence belongs to the UPF0398 family.

The chain is UPF0398 protein LAR_0869 from Limosilactobacillus reuteri subsp. reuteri (strain JCM 1112) (Lactobacillus reuteri).